The following is a 173-amino-acid chain: Adenine phosphoribosyltransferase (173 aa).

Belongs to the purine/pyrimidine phosphoribosyltransferase family. As to quaternary structure, homodimer.

Its subcellular location is the cytoplasm. The enzyme catalyses AMP + diphosphate = 5-phospho-alpha-D-ribose 1-diphosphate + adenine. It participates in purine metabolism; AMP biosynthesis via salvage pathway; AMP from adenine: step 1/1. Functionally, catalyzes a salvage reaction resulting in the formation of AMP, that is energically less costly than de novo synthesis. The chain is Adenine phosphoribosyltransferase from Methanococcus vannielii (strain ATCC 35089 / DSM 1224 / JCM 13029 / OCM 148 / SB).